A 279-amino-acid polypeptide reads, in one-letter code: Movement protein (279 aa).

This sequence belongs to the cucumovirus movement protein family.

The protein resides in the host cell junction. It localises to the host plasmodesma. Its function is as follows. Transports viral genome to neighboring plant cells directly through plasmosdesmata, without any budding. The movement protein allows efficient cell to cell propagation, by bypassing the host cell wall barrier. Acts by forming a tubular structure at the host plasmodesmata, enlarging it enough to allow free passage of virion capsids. This chain is Movement protein, found in Cucumber mosaic virus (strain Ixora) (CMV).